The following is a 192-amino-acid chain: Inner membrane protein YohD (192 aa).

The Periplasmic segment spans residues 1 to 40; that stretch reads MDLNTLISQYGYAALVIGSLAEGETVTLLGGVAAHQGLLK. Residues 41-61 form a helical membrane-spanning segment; it reads FPLVVLSVALGGMIGDQVLYL. At 62-121 the chain is on the cytoplasmic side; it reads CGRRFGGKLLRRFSKHQDKIERAQKLIQRHPYLFVIGTRFMYGFRVIGPTLIGASQLPPK. A helical membrane pass occupies residues 122–142; sequence IFLPLNILGAFAWALIFTTIG. The Periplasmic portion of the chain corresponds to 143–159; sequence YAGGQVIAPWLHNLDQH. Residues 160–180 form a helical membrane-spanning segment; the sequence is LKHWVWLILVVVLVVGVRWWL. The Cytoplasmic segment spans residues 181–192; that stretch reads KRRGKKKPDHQA.

Belongs to the DedA family.

The protein resides in the cell inner membrane. The polypeptide is Inner membrane protein YohD (yohD) (Escherichia coli (strain K12)).